The primary structure comprises 283 residues: Diaminopimelate epimerase (283 aa).

Substrate contacts are provided by N13 and N66. C75 acts as the Proton donor in catalysis. Residues 76–77, N165, N198, and 216–217 contribute to the substrate site; these read GN and ER. C225 acts as the Proton acceptor in catalysis. 226-227 serves as a coordination point for substrate; sequence GT.

The protein belongs to the diaminopimelate epimerase family. In terms of assembly, homodimer.

Its subcellular location is the cytoplasm. It carries out the reaction (2S,6S)-2,6-diaminopimelate = meso-2,6-diaminopimelate. It functions in the pathway amino-acid biosynthesis; L-lysine biosynthesis via DAP pathway; DL-2,6-diaminopimelate from LL-2,6-diaminopimelate: step 1/1. In terms of biological role, catalyzes the stereoinversion of LL-2,6-diaminopimelate (L,L-DAP) to meso-diaminopimelate (meso-DAP), a precursor of L-lysine and an essential component of the bacterial peptidoglycan. In Acaryochloris marina (strain MBIC 11017), this protein is Diaminopimelate epimerase.